Consider the following 512-residue polypeptide: Krueppel-like factor 11 (512 aa).

The segment at 109-128 (PQSPDLVEPSTRTPVSPQVT) is disordered. The segment covering 118–128 (STRTPVSPQVT) has biased composition (polar residues). The residue at position 124 (serine 124) is a Phosphoserine. 3 C2H2-type zinc fingers span residues 394–418 (YVCSFPGCRKTYFKSSHLKAHLRTH), 424–448 (FNCSWDGCDKKFARSDELSRHRRTH), and 454–476 (FVCPVCDRRFMRSDHLTKHARRH).

The protein belongs to the Sp1 C2H2-type zinc-finger protein family. As to quaternary structure, interacts with SIN3A. Ubiquitous. Higher expression in erythroid cells.

It localises to the nucleus. Transcription factor. Activates the epsilon- and gamma-globin gene promoters and, to a much lower degree, the beta-globin gene and represses promoters containing SP1-like binding inhibiting cell growth. Represses transcription of SMAD7 which enhances TGF-beta signaling. Induces apoptosis. The protein is Krueppel-like factor 11 (KLF11) of Homo sapiens (Human).